Here is a 51-residue protein sequence, read N- to C-terminus: Insulin (51 aa).

Disulfide bonds link Cys7-Cys37, Cys19-Cys50, and Cys36-Cys41.

The protein belongs to the insulin family. In terms of assembly, heterodimer of a B chain and an A chain linked by two disulfide bonds.

The protein resides in the secreted. Its function is as follows. Insulin decreases blood glucose concentration. It increases cell permeability to monosaccharides, amino acids and fatty acids. It accelerates glycolysis, the pentose phosphate cycle, and glycogen synthesis in liver. The sequence is that of Insulin (INS) from Hystrix cristata (North African crested porcupine).